Consider the following 195-residue polypeptide: ALK and LTK ligand 2b (195 aa).

2 disulfide bridges follow: Cys156-Cys192 and Cys170-Cys179.

This sequence belongs to the ALKAL family. Homodimer. Highly expressed in the swim bladder and single cells of unknown identity in the head.

It is found in the secreted. It localises to the cell membrane. Cytokine that acts as a physiological ligand for receptor tyrosine kinases LTK and ALK. Required for neural crest cell differentiation and iridophore development during embryonic iridophore development and adult stripe development by acting as a receptor for LTK. Also required for iridophore formation in the adult eye. The polypeptide is ALK and LTK ligand 2b (Danio rerio (Zebrafish)).